A 477-amino-acid chain; its full sequence is 3-isopropylmalate dehydratase large subunit 1 (477 aa).

3 residues coordinate [4Fe-4S] cluster: cysteine 357, cysteine 417, and cysteine 420.

It belongs to the aconitase/IPM isomerase family. LeuC type 1 subfamily. As to quaternary structure, heterodimer of LeuC and LeuD. [4Fe-4S] cluster is required as a cofactor.

The catalysed reaction is (2R,3S)-3-isopropylmalate = (2S)-2-isopropylmalate. It functions in the pathway amino-acid biosynthesis; L-leucine biosynthesis; L-leucine from 3-methyl-2-oxobutanoate: step 2/4. Functionally, catalyzes the isomerization between 2-isopropylmalate and 3-isopropylmalate, via the formation of 2-isopropylmaleate. In Bradyrhizobium diazoefficiens (strain JCM 10833 / BCRC 13528 / IAM 13628 / NBRC 14792 / USDA 110), this protein is 3-isopropylmalate dehydratase large subunit 1.